A 232-amino-acid chain; its full sequence is 5'-methylthioadenosine/S-adenosylhomocysteine nucleosidase (232 aa).

Glu-12 functions as the Proton acceptor in the catalytic mechanism. Substrate-binding positions include Gly-78, Ile-152, and 173–174 (ME). Asp-197 (proton donor) is an active-site residue.

This sequence belongs to the PNP/UDP phosphorylase family. MtnN subfamily. In terms of assembly, homodimer.

It catalyses the reaction S-adenosyl-L-homocysteine + H2O = S-(5-deoxy-D-ribos-5-yl)-L-homocysteine + adenine. It carries out the reaction S-methyl-5'-thioadenosine + H2O = 5-(methylsulfanyl)-D-ribose + adenine. The catalysed reaction is 5'-deoxyadenosine + H2O = 5-deoxy-D-ribose + adenine. Its pathway is amino-acid biosynthesis; L-methionine biosynthesis via salvage pathway; S-methyl-5-thio-alpha-D-ribose 1-phosphate from S-methyl-5'-thioadenosine (hydrolase route): step 1/2. Catalyzes the irreversible cleavage of the glycosidic bond in both 5'-methylthioadenosine (MTA) and S-adenosylhomocysteine (SAH/AdoHcy) to adenine and the corresponding thioribose, 5'-methylthioribose and S-ribosylhomocysteine, respectively. Also cleaves 5'-deoxyadenosine, a toxic by-product of radical S-adenosylmethionine (SAM) enzymes, into 5-deoxyribose and adenine. Thus, is required for in vivo function of the radical SAM enzymes biotin synthase and lipoic acid synthase, that are inhibited by 5'-deoxyadenosine accumulation. This Klebsiella pneumoniae (strain 342) protein is 5'-methylthioadenosine/S-adenosylhomocysteine nucleosidase.